Here is a 979-residue protein sequence, read N- to C-terminus: Probable serine/threonine-protein kinase iksA (979 aa).

Asn32, Asn110, Asn120, Asn121, Asn147, Asn155, Asn161, Asn220, Asn231, and Asn243 each carry an N-linked (GlcNAc...) asparagine glycan. The interval Ser207–Ser245 is disordered. Positions Asn212–Ser244 are enriched in low complexity. The 308-residue stretch at Phe261 to Ile568 folds into the Protein kinase domain. ATP is bound by residues Ile267–Val275 and Lys293. Asp397 acts as the Proton acceptor in catalysis. N-linked (GlcNAc...) asparagine glycans are attached at residues Asn592, Asn597, Asn615, Asn645, Asn646, Asn663, and Asn699. Positions Thr593–Thr602 are enriched in polar residues. The tract at residues Thr593 to Asn666 is disordered. The span at Ser610 to Asn666 shows a compositional bias: low complexity. The span at Asn713–Ser727 shows a compositional bias: acidic residues. Positions Asn713 to Pro793 are disordered. 2 stretches are compositionally biased toward low complexity: residues Thr728–Asp737 and Asn753–Lys773. Residues Asn731 and Asn734 are each glycosylated (N-linked (GlcNAc...) asparagine). Residues Phe846–Val866 traverse the membrane as a helical segment. Asn870 and Asn894 each carry an N-linked (GlcNAc...) asparagine glycan. The next 2 helical transmembrane spans lie at Ile912 to Pro932 and Phe956 to Phe976.

It belongs to the protein kinase superfamily. Ser/Thr protein kinase family.

The protein localises to the membrane. It carries out the reaction L-seryl-[protein] + ATP = O-phospho-L-seryl-[protein] + ADP + H(+). The catalysed reaction is L-threonyl-[protein] + ATP = O-phospho-L-threonyl-[protein] + ADP + H(+). This chain is Probable serine/threonine-protein kinase iksA (iksA), found in Dictyostelium discoideum (Social amoeba).